The primary structure comprises 264 residues: Ribosomal RNA small subunit methyltransferase A (264 aa).

Residues Asn15, Ile17, Gly42, Glu64, Asp90, and Asn109 each coordinate S-adenosyl-L-methionine.

The protein belongs to the class I-like SAM-binding methyltransferase superfamily. rRNA adenine N(6)-methyltransferase family. RsmA subfamily.

The protein resides in the cytoplasm. The catalysed reaction is adenosine(1518)/adenosine(1519) in 16S rRNA + 4 S-adenosyl-L-methionine = N(6)-dimethyladenosine(1518)/N(6)-dimethyladenosine(1519) in 16S rRNA + 4 S-adenosyl-L-homocysteine + 4 H(+). Functionally, specifically dimethylates two adjacent adenosines (A1518 and A1519) in the loop of a conserved hairpin near the 3'-end of 16S rRNA in the 30S particle. May play a critical role in biogenesis of 30S subunits. The protein is Ribosomal RNA small subunit methyltransferase A of Wolbachia pipientis subsp. Culex pipiens (strain wPip).